The primary structure comprises 899 residues: MANEHSPLLVHGVYSMMGNAEDSRGGSAGTGEASNPKTDPRKLNTFFGVMVPTILSMFSIVLFLRTGFVVGHAGLLHGLLMLFVAYFIISLTILSICAISTNGAVEGGGAYFMISRSLGPEFGGSIGLMFYLAKVCACGVYVLGLVEAIMDVFGQDPGSSVAQGLRVLPQGYWYTVLYSSVVLLLCMLVCLVGAHIYAKASFLILLVVTVSLISIIISPLIVSPQGFNITHTYGNNHSVTVSPSYTGFNSTTLKNNLGPRYSLDYSTNTMMSFATVFAVMFTSCTGIMAGANMSGELKNPSESIPKGTIMAVAYTFTVYVLLYLLLSSTCDRSLLLNDYAVFQRVNVWPPFVTIGVYCASLSAAMCSMIGASRILHALALDQLFGLPLAPAAVTSSSGNPWVSVLYTWALVQCTLFAGQLNVIAGIVTVFYLLAYAAVDLACLALEWASAPNFRPTFQFFSWHTCLLGIISCVVMMFVINPVYSSASIVLLLLLLLFLHYRSPTSSWGYISQALIFHQVRKYLLMLDSRKDHVKFWRPQVLLMVSNPRSSCQLICFVNQLKKGGLFVLGHVQIGDLDVLPADPVQPQYNFWLSLVDKLGVKAFVDLTLSPSVRQGTQHLLRITGLGGMKPNTLVLGFYDNSYPEDYFLQDPVFCKGDRSEGDNFGVDLPSLQAHFPPVRHAESPRALQPQEYVSIIQDAIKMGKNICLARYFFQLPPESKGATYMWGKDSMDTIDVWPTNLLTPGSASYADVGSLFLLQMACVLNMASGWRRARLRIFVCVESESEDQGWLAKEEQFRELLGKLRIRAAIKIVAWDNVARMVRGPNTESQPVSEDFLCAVNGLLKEHSSTAAVRFLYLPDPPSSCELSQQYLTQLDTLTRDLGPTLLIHGVTPVTCTEL.

The Cytoplasmic portion of the chain corresponds to 1 to 42; it reads MANEHSPLLVHGVYSMMGNAEDSRGGSAGTGEASNPKTDPRK. A helical membrane pass occupies residues 43–63; it reads LNTFFGVMVPTILSMFSIVLF. Over 64-78 the chain is Extracellular; that stretch reads LRTGFVVGHAGLLHG. A helical transmembrane segment spans residues 79-99; sequence LLMLFVAYFIISLTILSICAI. Residues 100–125 lie on the Cytoplasmic side of the membrane; the sequence is STNGAVEGGGAYFMISRSLGPEFGGS. Residues 126–146 form a helical membrane-spanning segment; it reads IGLMFYLAKVCACGVYVLGLV. Topologically, residues 147 to 175 are extracellular; it reads EAIMDVFGQDPGSSVAQGLRVLPQGYWYT. The chain crosses the membrane as a helical span at residues 176–196; it reads VLYSSVVLLLCMLVCLVGAHI. The Cytoplasmic portion of the chain corresponds to 197 to 201; sequence YAKAS. The chain crosses the membrane as a helical span at residues 202–222; it reads FLILLVVTVSLISIIISPLIV. Residues 223-269 lie on the Extracellular side of the membrane; the sequence is SPQGFNITHTYGNNHSVTVSPSYTGFNSTTLKNNLGPRYSLDYSTNT. 3 N-linked (GlcNAc...) asparagine glycosylation sites follow: N228, N236, and N249. A helical transmembrane segment spans residues 270 to 290; it reads MMSFATVFAVMFTSCTGIMAG. The Cytoplasmic segment spans residues 291–306; it reads ANMSGELKNPSESIPK. The helical transmembrane segment at 307 to 327 threads the bilayer; the sequence is GTIMAVAYTFTVYVLLYLLLS. At 328–350 the chain is on the extracellular side; the sequence is STCDRSLLLNDYAVFQRVNVWPP. The helical transmembrane segment at 351–371 threads the bilayer; it reads FVTIGVYCASLSAAMCSMIGA. The Cytoplasmic segment spans residues 372-373; sequence SR. A helical membrane pass occupies residues 374–394; it reads ILHALALDQLFGLPLAPAAVT. Topologically, residues 395–399 are extracellular; that stretch reads SSSGN. Residues 400 to 420 traverse the membrane as a helical segment; that stretch reads PWVSVLYTWALVQCTLFAGQL. A topological domain (cytoplasmic) is located at residue N421. The helical transmembrane segment at 422 to 442 threads the bilayer; sequence VIAGIVTVFYLLAYAAVDLAC. Residues 443-455 are Extracellular-facing; it reads LALEWASAPNFRP. Residues 456 to 476 traverse the membrane as a helical segment; the sequence is TFQFFSWHTCLLGIISCVVMM. At 477–487 the chain is on the extracellular side; sequence FVINPVYSSAS. The chain crosses the membrane as a helical span at residues 488-510; that stretch reads IVLLLLLLLFLHYRSPTSSWGYI. Residues 511 to 563 are Cytoplasmic-facing; the sequence is SQALIFHQVRKYLLMLDSRKDHVKFWRPQVLLMVSNPRSSCQLICFVNQLKKG. The helical transmembrane segment at 564-584 threads the bilayer; that stretch reads GLFVLGHVQIGDLDVLPADPV. Over 585–749 the chain is Extracellular; that stretch reads QPQYNFWLSL…NLLTPGSASY (165 aa). Residues 750 to 770 traverse the membrane as a helical segment; the sequence is ADVGSLFLLQMACVLNMASGW. Residues 771-899 lie on the Cytoplasmic side of the membrane; sequence RRARLRIFVC…GVTPVTCTEL (129 aa).

The protein belongs to the SLC12A transporter family.

Its subcellular location is the cell membrane. The protein localises to the lysosome membrane. Seems to correspond to a subunit of a multimeric transport system and thus, additional subunits may be required for its function. May play a role in lysosomal ion flux and osmoregulation. The chain is Solute carrier family 12 member 9 (slc12a9) from Danio rerio (Zebrafish).